The following is a 147-amino-acid chain: Testis-expressed protein 29 (147 aa).

Topologically, residues 1-57 (MRYAPEFKKSPSHLLKKFAVCDIPLYDICDYNVSRDRCKELGCCFYKGICYEKAVPS) are extracellular. Residues 58–78 (YVQVFSALIVIIAGAFVITII) form a helical membrane-spanning segment. The Cytoplasmic segment spans residues 79-147 (YRVIQESRRE…IVTEEEETED (69 aa)). A disordered region spans residues 86–147 (RREKEVPTEA…IVTEEEETED (62 aa)). A compositionally biased stretch (polar residues) spans 99 to 108 (AKSSVQVETQ). Residues 109–120 (PPSSAGAGSKAP) show a composition bias toward low complexity. Basic and acidic residues predominate over residues 125–135 (PQSKESGREDA).

The protein localises to the membrane. The chain is Testis-expressed protein 29 (TEX29) from Bos taurus (Bovine).